The primary structure comprises 78 residues: Beta-defensin 105A (78 aa).

A signal peptide spans 1-27 (MALIRKTFYFLFAVFFILVQLPSGCQA). 3 disulfides stabilise this stretch: C46/C74, C53/C67, and C57/C73.

This sequence belongs to the beta-defensin family.

It is found in the secreted. Functionally, has antimicrobial activity. The polypeptide is Beta-defensin 105A (DEFB105A) (Hylobates lar (Lar gibbon)).